A 260-amino-acid chain; its full sequence is Cytochrome c oxidase subunit 3 (260 aa).

A run of 6 helical transmembrane segments spans residues 41–61 (LTLV…RDII), 81–101 (GMIL…WAFF), 133–153 (TGVL…ILAG), 161–181 (ALFL…WEYI), 196–216 (FFVA…FLMV), and 238–258 (AWYW…IYWW).

It belongs to the cytochrome c oxidase subunit 3 family. In terms of assembly, component of the cytochrome c oxidase (complex IV, CIV), a multisubunit enzyme composed of a catalytic core of 3 subunits and several supernumerary subunits. The complex exists as a monomer or a dimer and forms supercomplexes (SCs) in the inner mitochondrial membrane with ubiquinol-cytochrome c oxidoreductase (cytochrome b-c1 complex, complex III, CIII).

It localises to the mitochondrion inner membrane. It catalyses the reaction 4 Fe(II)-[cytochrome c] + O2 + 8 H(+)(in) = 4 Fe(III)-[cytochrome c] + 2 H2O + 4 H(+)(out). Component of the cytochrome c oxidase, the last enzyme in the mitochondrial electron transport chain which drives oxidative phosphorylation. The respiratory chain contains 3 multisubunit complexes succinate dehydrogenase (complex II, CII), ubiquinol-cytochrome c oxidoreductase (cytochrome b-c1 complex, complex III, CIII) and cytochrome c oxidase (complex IV, CIV), that cooperate to transfer electrons derived from NADH and succinate to molecular oxygen, creating an electrochemical gradient over the inner membrane that drives transmembrane transport and the ATP synthase. Cytochrome c oxidase is the component of the respiratory chain that catalyzes the reduction of oxygen to water. Electrons originating from reduced cytochrome c in the intermembrane space (IMS) are transferred via the dinuclear copper A center (CU(A)) of subunit 2 and heme A of subunit 1 to the active site in subunit 1, a binuclear center (BNC) formed by heme A3 and copper B (CU(B)). The BNC reduces molecular oxygen to 2 water molecules using 4 electrons from cytochrome c in the IMS and 4 protons from the mitochondrial matrix. The protein is Cytochrome c oxidase subunit 3 (COIII) of Strongylocentrotus purpuratus (Purple sea urchin).